We begin with the raw amino-acid sequence, 177 residues long: Large ribosomal subunit protein uL6 (177 aa).

This sequence belongs to the universal ribosomal protein uL6 family. As to quaternary structure, part of the 50S ribosomal subunit.

Functionally, this protein binds to the 23S rRNA, and is important in its secondary structure. It is located near the subunit interface in the base of the L7/L12 stalk, and near the tRNA binding site of the peptidyltransferase center. This is Large ribosomal subunit protein uL6 from Bartonella henselae (strain ATCC 49882 / DSM 28221 / CCUG 30454 / Houston 1) (Rochalimaea henselae).